We begin with the raw amino-acid sequence, 647 residues long: Putative lipase atg15 (647 aa).

Residues 1–18 lie on the Cytoplasmic side of the membrane; it reads MLPSGKRKADAFSCTSAA. Residues 19 to 39 traverse the membrane as a helical; Signal-anchor for type II membrane protein segment; it reads RVTAKLALSFLALSTTPLVNA. Residues 40 to 647 are Lumenal-facing; the sequence is FSYEEPNAQI…EGGEGPVNDL (608 aa). N-linked (GlcNAc...) asparagine glycans are attached at residues Asn-203, Asn-225, Asn-283, and Asn-307. The active-site Charge relay system is Ser-323. Asn-469 carries N-linked (GlcNAc...) asparagine glycosylation. The tract at residues 597–626 is disordered; it reads APALPSSVLTPSATATPPEGQPDDSGKRCR.

The protein belongs to the AB hydrolase superfamily. Lipase family. Binds to both phosphatidylinositol (PI) and phosphatidylinositol 3,5-bisphosphate (PIP2).

Its subcellular location is the endosome. It is found in the multivesicular body membrane. It localises to the prevacuolar compartment membrane. It catalyses the reaction a triacylglycerol + H2O = a diacylglycerol + a fatty acid + H(+). Functionally, lipase which is essential for lysis of subvacuolar cytoplasm to vacuole targeted bodies and intravacuolar autophagic bodies. Involved in the lysis of intravacuolar multivesicular body (MVB) vesicles. The intravacuolar membrane disintegration by atg15 is critical to life span extension. This Neurospora crassa (strain ATCC 24698 / 74-OR23-1A / CBS 708.71 / DSM 1257 / FGSC 987) protein is Putative lipase atg15 (atg15).